A 792-amino-acid chain; its full sequence is Probable beta-D-xylosidase 6 (792 aa).

The signal sequence occupies residues 1-18; sequence MNLQLTLISLLFFTSAIA. Asparagine 44, asparagine 104, asparagine 124, and asparagine 239 each carry an N-linked (GlcNAc...) asparagine glycan. Aspartate 309 is an active-site residue. 2 N-linked (GlcNAc...) asparagine glycosylation sites follow: asparagine 444 and asparagine 618.

This sequence belongs to the glycosyl hydrolase 3 family.

Its subcellular location is the secreted. The protein resides in the extracellular space. It is found in the extracellular matrix. The polypeptide is Probable beta-D-xylosidase 6 (BXL6) (Arabidopsis thaliana (Mouse-ear cress)).